A 395-amino-acid chain; its full sequence is ADP-ribosylation factor-like protein 13A (395 aa).

Residues 28–35 (GLDNSGKS), 71–75 (DLTGD), and 130–133 (NKQD) each bind GTP.

It belongs to the small GTPase superfamily. Arf family.

This Rattus norvegicus (Rat) protein is ADP-ribosylation factor-like protein 13A (Arl13a).